A 375-amino-acid chain; its full sequence is Growth/differentiation factor 8 (375 aa).

Residues 1–23 (MQKLAVYVYIYLFMQILVHPVAL) form the signal peptide. Residues 24 to 266 (DGSSQPTENA…VTDTPKRSRR (243 aa)) constitute a propeptide that is removed on maturation. An N-linked (GlcNAc...) asparagine glycan is attached at asparagine 71. 4 cysteine pairs are disulfide-bonded: cysteine 272/cysteine 282, cysteine 281/cysteine 340, cysteine 309/cysteine 372, and cysteine 313/cysteine 374.

It belongs to the TGF-beta family. As to quaternary structure, homodimer; disulfide-linked.

The protein localises to the secreted. Functionally, acts specifically as a negative regulator of skeletal muscle growth. The sequence is that of Growth/differentiation factor 8 (MSTN) from Meleagris gallopavo (Wild turkey).